The following is a 188-amino-acid chain: Large ribosomal subunit protein eL18 (188 aa).

It belongs to the eukaryotic ribosomal protein eL18 family.

The protein resides in the cytoplasm. This is Large ribosomal subunit protein eL18 (RpL18) from Drosophila melanogaster (Fruit fly).